Reading from the N-terminus, the 805-residue chain is Mitochondrial inner membrane m-AAA protease component AFG3L2 (805 aa).

The N-terminal 39 residues, 1–39, are a transit peptide targeting the mitochondrion; the sequence is MAHRCLLLWGRGACRPRGMPPMLLPGGRTGSTERLYLRM. The propeptide at 40 to 67 is removed in mature form; the sequence is LYRYATTQAKTSRNSLLTDVIAAYQRLC. A disordered region spans residues 74-127; it reads FEKYFPNGKNGKKTSEPKEVMGEKKEPKPAAAPRPSGGGVGGGGKRGGKKDDSH. Over residues 86 to 101 the composition is skewed to basic and acidic residues; it reads KTSEPKEVMGEKKEPK. Residues 109–118 are compositionally biased toward gly residues; the sequence is SGGGVGGGGK. Lys-118 carries the post-translational modification N6-succinyllysine. Transmembrane regions (helical) follow at residues 144–164 and 252–272; these read FKMY…YFLF and GSFL…LYTI. Residues Val-311, Ala-312, Thr-353, Gly-354, Lys-355, Thr-356, Leu-357, and His-491 each contribute to the ATP site. His-575 is a Zn(2+) binding site. Glu-576 is an active-site residue. 2 residues coordinate Zn(2+): His-579 and Asp-650. The interval 760–805 is disordered; that stretch reads FVEGTGSLDEDTSLPEGLKDWNREREGSEEPSGEKVTSPVQGAGPA. A compositionally biased stretch (basic and acidic residues) spans 776-787; that stretch reads GLKDWNREREGS.

In the N-terminal section; belongs to the AAA ATPase family. It in the C-terminal section; belongs to the peptidase M41 family. In terms of assembly, homohexamer. Forms heterohexamers with SPG7. The m-AAA protease is either composed of homohexamers of AFG3L2 or heterohexamers of AFG3L2 and SPG7. Interacts with MAIP1. Interacts with DNAJC19. Interacts with PHB2. It depends on Zn(2+) as a cofactor. Post-translationally, upon import into the mitochondrion, the N-terminal transit peptide is cleaved to generate an intermediate form which undergoes autocatalytic proteolytic processing to generate the proteolytically active mature form.

The protein resides in the mitochondrion inner membrane. It carries out the reaction ATP + H2O = ADP + phosphate + H(+). Its function is as follows. Catalytic component of the m-AAA protease, a protease that plays a key role in proteostasis of inner mitochondrial membrane proteins, and which is essential for axonal and neuron development. AFG3L2 possesses both ATPase and protease activities: the ATPase activity is required to unfold substrates, threading them into the internal proteolytic cavity for hydrolysis into small peptide fragments. The m-AAA protease carries out protein quality control in the inner membrane of the mitochondria by mediating degradation of mistranslated or misfolded polypeptides. The m-AAA protease complex also promotes the processing and maturation of mitochondrial proteins, such as MRPL32/bL32m, PINK1 and SP7. Mediates protein maturation of the mitochondrial ribosomal subunit MRPL32/bL32m by catalyzing the cleavage of the presequence of MRPL32/bL32m prior to assembly into the mitochondrial ribosome. Required for SPG7 maturation into its active mature form after SPG7 cleavage by mitochondrial-processing peptidase (MPP). Required for the maturation of PINK1 into its 52kDa mature form after its cleavage by mitochondrial-processing peptidase (MPP). Acts as a regulator of calcium in neurons by mediating degradation of SMDT1/EMRE before its assembly with the uniporter complex, limiting the availability of SMDT1/EMRE for MCU assembly and promoting efficient assembly of gatekeeper subunits with MCU. Promotes the proteolytic degradation of GHITM upon hyperpolarization of mitochondria: progressive GHITM degradation leads to respiratory complex I degradation and broad reshaping of the mitochondrial proteome by AFG3L2. Also acts as a regulator of mitochondrial glutathione homeostasis by mediating cleavage and degradation of SLC25A39. SLC25A39 cleavage is prevented when SLC25A39 binds iron-sulfur. Involved in the regulation of OMA1-dependent processing of OPA1. May act by mediating processing of OMA1 precursor, participating in OMA1 maturation. The polypeptide is Mitochondrial inner membrane m-AAA protease component AFG3L2 (AFG3L2) (Bos taurus (Bovine)).